Reading from the N-terminus, the 125-residue chain is Probable 4-amino-4-deoxy-L-arabinose-phosphoundecaprenol flippase subunit ArnF (125 aa).

Residues 1–2 (MG) lie on the Cytoplasmic side of the membrane. A helical transmembrane segment spans residues 3–23 (VMWGLISVAIASLAQLSLGFA). Topologically, residues 24–33 (MMRLPSIAHP) are periplasmic. The helical transmembrane segment at 34–54 (LAFISGLGALNAATLALFAGL) threads the bilayer. At 55-76 (AGYLVSVFCWHKTLHTLALSKA) the chain is on the cytoplasmic side. Residues 77-97 (YALLSLSYVLVWVASMLLPGL) traverse the membrane as a helical segment. The Periplasmic segment spans residues 98-100 (QGA). A helical transmembrane segment spans residues 101 to 121 (FSLKAMLGVLCIMAGVMLIFL). The Cytoplasmic segment spans residues 122-125 (PARS).

The protein belongs to the ArnF family. In terms of assembly, heterodimer of ArnE and ArnF.

The protein resides in the cell inner membrane. It functions in the pathway bacterial outer membrane biogenesis; lipopolysaccharide biosynthesis. Its function is as follows. Translocates 4-amino-4-deoxy-L-arabinose-phosphoundecaprenol (alpha-L-Ara4N-phosphoundecaprenol) from the cytoplasmic to the periplasmic side of the inner membrane. This chain is Probable 4-amino-4-deoxy-L-arabinose-phosphoundecaprenol flippase subunit ArnF, found in Salmonella agona (strain SL483).